A 345-amino-acid polypeptide reads, in one-letter code: Dihydroorotase (345 aa).

The Zn(2+) site is built by H13 and H15. Substrate-binding positions include 15-17 (HLR) and N41. Zn(2+)-binding residues include K99, H136, and H174. K99 bears the N6-carboxylysine mark. H136 is a substrate binding site. Substrate is bound at residue L219. D247 serves as a coordination point for Zn(2+). Residue D247 is part of the active site. Substrate-binding residues include H251 and A263.

The protein belongs to the metallo-dependent hydrolases superfamily. DHOase family. Class II DHOase subfamily. In terms of assembly, homodimer. The cofactor is Zn(2+).

It carries out the reaction (S)-dihydroorotate + H2O = N-carbamoyl-L-aspartate + H(+). It participates in pyrimidine metabolism; UMP biosynthesis via de novo pathway; (S)-dihydroorotate from bicarbonate: step 3/3. Functionally, catalyzes the reversible cyclization of carbamoyl aspartate to dihydroorotate. In Agrobacterium fabrum (strain C58 / ATCC 33970) (Agrobacterium tumefaciens (strain C58)), this protein is Dihydroorotase.